A 150-amino-acid chain; its full sequence is MRVVIQRVSHASVTIDGHCKSAIQKGMMILVGIEETDSWEDIDWLCKKIVNLRIFDDENGVMNKSILEDEGNILVISQFTLHASTKKGNRPSYIKAAKPEISIPLYEQFCNDLSCALGKEVKTGEFGADMKVELLNDGPVTICIDTKNKE.

The short motif at 138–139 (GP) is the Gly-cisPro motif, important for rejection of L-amino acids element.

Belongs to the DTD family. Homodimer.

It localises to the cytoplasm. It catalyses the reaction glycyl-tRNA(Ala) + H2O = tRNA(Ala) + glycine + H(+). The enzyme catalyses a D-aminoacyl-tRNA + H2O = a tRNA + a D-alpha-amino acid + H(+). An aminoacyl-tRNA editing enzyme that deacylates mischarged D-aminoacyl-tRNAs. Also deacylates mischarged glycyl-tRNA(Ala), protecting cells against glycine mischarging by AlaRS. Acts via tRNA-based rather than protein-based catalysis; rejects L-amino acids rather than detecting D-amino acids in the active site. By recycling D-aminoacyl-tRNA to D-amino acids and free tRNA molecules, this enzyme counteracts the toxicity associated with the formation of D-aminoacyl-tRNA entities in vivo and helps enforce protein L-homochirality. The sequence is that of D-aminoacyl-tRNA deacylase from Bacteroides fragilis (strain ATCC 25285 / DSM 2151 / CCUG 4856 / JCM 11019 / LMG 10263 / NCTC 9343 / Onslow / VPI 2553 / EN-2).